Consider the following 301-residue polypeptide: Probable 5-dehydro-4-deoxyglucarate dehydratase (301 aa).

The protein belongs to the DapA family.

The catalysed reaction is 5-dehydro-4-deoxy-D-glucarate + H(+) = 2,5-dioxopentanoate + CO2 + H2O. The protein operates within carbohydrate acid metabolism; D-glucarate degradation; 2,5-dioxopentanoate from D-glucarate: step 2/2. The chain is Probable 5-dehydro-4-deoxyglucarate dehydratase from Allorhizobium ampelinum (strain ATCC BAA-846 / DSM 112012 / S4) (Agrobacterium vitis (strain S4)).